Reading from the N-terminus, the 277-residue chain is Putative phosphoenolpyruvate synthase regulatory protein (277 aa).

157–164 contacts ADP; it reads GVSRCGKT.

Belongs to the pyruvate, phosphate/water dikinase regulatory protein family. PSRP subfamily.

The catalysed reaction is [pyruvate, water dikinase] + ADP = [pyruvate, water dikinase]-phosphate + AMP + H(+). It catalyses the reaction [pyruvate, water dikinase]-phosphate + phosphate + H(+) = [pyruvate, water dikinase] + diphosphate. Functionally, bifunctional serine/threonine kinase and phosphorylase involved in the regulation of the phosphoenolpyruvate synthase (PEPS) by catalyzing its phosphorylation/dephosphorylation. The protein is Putative phosphoenolpyruvate synthase regulatory protein of Erwinia tasmaniensis (strain DSM 17950 / CFBP 7177 / CIP 109463 / NCPPB 4357 / Et1/99).